Consider the following 233-residue polypeptide: Riboflavin kinase (233 aa).

The interval 1 to 104 (MVRDIKTFKF…YKKIFDDEGT (104 aa)) is H-T-H motif-like. Residues 105 to 233 (IKIKGEVFSG…GDFVEVEVIL (129 aa)) form a riboflavin kinase region. 114–119 (GVGEGR) contributes to the CDP binding site. Residues threonine 143 and asparagine 145 each coordinate Mg(2+). Positions 200 and 208 each coordinate FMN. A CDP-binding site is contributed by 213 to 216 (VKLR).

It belongs to the archaeal riboflavin kinase family. Mg(2+) serves as cofactor.

The enzyme catalyses riboflavin + CTP = CDP + FMN + H(+). Its pathway is cofactor biosynthesis; FMN biosynthesis; FMN from riboflavin (CTP route): step 1/1. Its function is as follows. Catalyzes the CTP-dependent phosphorylation of riboflavin (vitamin B2) to form flavin mononucleotide (FMN). This Archaeoglobus fulgidus (strain ATCC 49558 / DSM 4304 / JCM 9628 / NBRC 100126 / VC-16) protein is Riboflavin kinase (ribK).